Reading from the N-terminus, the 174-residue chain is NAD(P)H-quinone oxidoreductase subunit J, chloroplastic (174 aa).

It belongs to the complex I 30 kDa subunit family. In terms of assembly, NDH is composed of at least 16 different subunits, 5 of which are encoded in the nucleus.

Its subcellular location is the plastid. It is found in the chloroplast thylakoid membrane. It carries out the reaction a plastoquinone + NADH + (n+1) H(+)(in) = a plastoquinol + NAD(+) + n H(+)(out). The catalysed reaction is a plastoquinone + NADPH + (n+1) H(+)(in) = a plastoquinol + NADP(+) + n H(+)(out). Functionally, NDH shuttles electrons from NAD(P)H:plastoquinone, via FMN and iron-sulfur (Fe-S) centers, to quinones in the photosynthetic chain and possibly in a chloroplast respiratory chain. The immediate electron acceptor for the enzyme in this species is believed to be plastoquinone. Couples the redox reaction to proton translocation, and thus conserves the redox energy in a proton gradient. The protein is NAD(P)H-quinone oxidoreductase subunit J, chloroplastic of Mesostigma viride (Green alga).